Reading from the N-terminus, the 226-residue chain is 7-cyano-7-deazaguanine synthase (226 aa).

8-18 lines the ATP pocket; that stretch reads ISGGLDSTTCL. Zn(2+) is bound by residues cysteine 188, cysteine 198, cysteine 201, and cysteine 204.

The protein belongs to the QueC family. The cofactor is Zn(2+).

It carries out the reaction 7-carboxy-7-deazaguanine + NH4(+) + ATP = 7-cyano-7-deazaguanine + ADP + phosphate + H2O + H(+). It functions in the pathway purine metabolism; 7-cyano-7-deazaguanine biosynthesis. In terms of biological role, catalyzes the ATP-dependent conversion of 7-carboxy-7-deazaguanine (CDG) to 7-cyano-7-deazaguanine (preQ(0)). In Coxiella burnetii (strain RSA 493 / Nine Mile phase I), this protein is 7-cyano-7-deazaguanine synthase.